Consider the following 248-residue polypeptide: 4-hydroxy-tetrahydrodipicolinate reductase (248 aa).

Residues aspartate 32, 74–76, and 99–102 each bind NAD(+); these read GTT and SANF. Residue histidine 134 is the Proton donor/acceptor of the active site. Residue histidine 135 coordinates (S)-2,3,4,5-tetrahydrodipicolinate. Lysine 138 (proton donor) is an active-site residue. Residue 144–145 coordinates (S)-2,3,4,5-tetrahydrodipicolinate; that stretch reads GT.

The protein belongs to the DapB family.

It is found in the cytoplasm. It catalyses the reaction (S)-2,3,4,5-tetrahydrodipicolinate + NAD(+) + H2O = (2S,4S)-4-hydroxy-2,3,4,5-tetrahydrodipicolinate + NADH + H(+). It carries out the reaction (S)-2,3,4,5-tetrahydrodipicolinate + NADP(+) + H2O = (2S,4S)-4-hydroxy-2,3,4,5-tetrahydrodipicolinate + NADPH + H(+). The protein operates within amino-acid biosynthesis; L-lysine biosynthesis via DAP pathway; (S)-tetrahydrodipicolinate from L-aspartate: step 4/4. Its function is as follows. Catalyzes the conversion of 4-hydroxy-tetrahydrodipicolinate (HTPA) to tetrahydrodipicolinate. The chain is 4-hydroxy-tetrahydrodipicolinate reductase from Pelodictyon phaeoclathratiforme (strain DSM 5477 / BU-1).